The sequence spans 84 residues: Putative defensin-like protein 165 (84 aa).

The first 27 residues, M1 to A27, serve as a signal peptide directing secretion. 4 disulfide bridges follow: C31–C78, C41–C60, C46–C72, and C50–C74.

It belongs to the DEFL family.

The protein resides in the secreted. The sequence is that of Putative defensin-like protein 165 (LCR12) from Arabidopsis thaliana (Mouse-ear cress).